A 417-amino-acid chain; its full sequence is UDP-N-acetylmuramoylalanine--D-glutamate ligase (417 aa).

104 to 110 (GSNGKST) is an ATP binding site.

Belongs to the MurCDEF family.

It is found in the cytoplasm. It catalyses the reaction UDP-N-acetyl-alpha-D-muramoyl-L-alanine + D-glutamate + ATP = UDP-N-acetyl-alpha-D-muramoyl-L-alanyl-D-glutamate + ADP + phosphate + H(+). Its pathway is cell wall biogenesis; peptidoglycan biosynthesis. In terms of biological role, cell wall formation. Catalyzes the addition of glutamate to the nucleotide precursor UDP-N-acetylmuramoyl-L-alanine (UMA). The protein is UDP-N-acetylmuramoylalanine--D-glutamate ligase of Francisella tularensis subsp. novicida (strain U112).